A 275-amino-acid chain; its full sequence is 3-methyl-2-oxobutanoate hydroxymethyltransferase (275 aa).

Mg(2+) contacts are provided by D55 and D94. Residues 55–56, D94, and K122 contribute to the 3-methyl-2-oxobutanoate site; that span reads DS. E124 is a binding site for Mg(2+). The active-site Proton acceptor is the E191.

The protein belongs to the PanB family. In terms of assembly, homodecamer; pentamer of dimers. Mg(2+) serves as cofactor.

It is found in the cytoplasm. The catalysed reaction is 3-methyl-2-oxobutanoate + (6R)-5,10-methylene-5,6,7,8-tetrahydrofolate + H2O = 2-dehydropantoate + (6S)-5,6,7,8-tetrahydrofolate. The protein operates within cofactor biosynthesis; (R)-pantothenate biosynthesis; (R)-pantoate from 3-methyl-2-oxobutanoate: step 1/2. In terms of biological role, catalyzes the reversible reaction in which hydroxymethyl group from 5,10-methylenetetrahydrofolate is transferred onto alpha-ketoisovalerate to form ketopantoate. The protein is 3-methyl-2-oxobutanoate hydroxymethyltransferase of Marinomonas sp. (strain MWYL1).